The sequence spans 258 residues: Axonemal dynein light intermediate polypeptide 1 (258 aa).

Disordered stretches follow at residues 1 to 60 (MIPP…CVPD) and 202 to 231 (DLER…EEKK). A coiled-coil region spans residues 176 to 255 (MRKALQAEQG…LKAQLEGIIA (80 aa)).

Belongs to the inner dynein arm light chain family. Interacts with CFAP45. Interacts with DYNC1H1.

It is found in the cell projection. The protein resides in the cilium. Its subcellular location is the flagellum. It localises to the dynein axonemal particle. The protein localises to the cytoplasm. Its function is as follows. Involved in sperm flagellum assembly. The chain is Axonemal dynein light intermediate polypeptide 1 from Rattus norvegicus (Rat).